Here is a 657-residue protein sequence, read N- to C-terminus: MSEHTTSQTQVTVTLPDGESRSFPFGTTGYDIARSIGKKLAQDALAVVINGRAQDLDSPVSEDASIEIVTFDHPLGKEIFWHSASHIMAHAIEELFPGSRFGAGPAIEQGFYYDIASSHRFTESDLHDIETRMIEIGRRAIDVRREELSRQAAIDFFSSTRKDPYKVEILEDTLKDTPTVSIYHQGEFADLCTGPHLPNTSKLKAVKLTNISASFWRGDSSRESMQRIYGIAFPSEKLLKQHLAHIEEAKKRDHRKLGAELELFMLSPEVGSGLPIWLPKGAIVRNELESFLREEQRKRGYVPVYTPHIGNIGLYKRSGHYPYYSESQFPPLTYTDDLGREEQYLLKPMNCPHHHMIYSSKLRSYRDLPIRLTEFGTVYRHEQSGELNGLIRARGFTQDDSHIYCRPDQLVDEICNAIDLTKFVFATLGFDDIQIRLSLHDPENQDKYGGTKEVWEQAEKDVREAADRMNIDYFTGIGEASFYGPKIDFIVRDAIGRKWQLGTVQVDYVMPERFDLSYIGSDGQPHRPVIIHRAPFGSMERFIGVLIEHTGGNFPLWLAPVQIAVLPITDEVHDYAVQVRDTLHAAGMRVELDTRSEKIGKKIRESEVAKIPYMVIIGQKEAAAGEVSLRRHREGDQGNMTVEELKEKLAKEINDKS.

Positions 7 to 70 (SQTQVTVTLP…SEDASIEIVT (64 aa)) constitute a TGS domain. The segment at 253–555 (DHRKLGAELE…LIEHTGGNFP (303 aa)) is catalytic. Zn(2+)-binding residues include Cys351, His402, and His532.

It belongs to the class-II aminoacyl-tRNA synthetase family. Homodimer. Requires Zn(2+) as cofactor.

The protein localises to the cytoplasm. The catalysed reaction is tRNA(Thr) + L-threonine + ATP = L-threonyl-tRNA(Thr) + AMP + diphosphate + H(+). In terms of biological role, catalyzes the attachment of threonine to tRNA(Thr) in a two-step reaction: L-threonine is first activated by ATP to form Thr-AMP and then transferred to the acceptor end of tRNA(Thr). Also edits incorrectly charged L-seryl-tRNA(Thr). In Prosthecochloris aestuarii (strain DSM 271 / SK 413), this protein is Threonine--tRNA ligase.